The following is a 390-amino-acid chain: Chorismate synthase (390 aa).

Residues Arg-39 and Arg-45 each contribute to the NADP(+) site. FMN contacts are provided by residues 132-134 (RSS), 253-254 (NA), Gly-298, 313-317 (KPIPT), and Arg-339.

It belongs to the chorismate synthase family. In terms of assembly, homotetramer. It depends on FMNH2 as a cofactor.

The catalysed reaction is 5-O-(1-carboxyvinyl)-3-phosphoshikimate = chorismate + phosphate. Its pathway is metabolic intermediate biosynthesis; chorismate biosynthesis; chorismate from D-erythrose 4-phosphate and phosphoenolpyruvate: step 7/7. Its function is as follows. Catalyzes the anti-1,4-elimination of the C-3 phosphate and the C-6 proR hydrogen from 5-enolpyruvylshikimate-3-phosphate (EPSP) to yield chorismate, which is the branch point compound that serves as the starting substrate for the three terminal pathways of aromatic amino acid biosynthesis. This reaction introduces a second double bond into the aromatic ring system. This is Chorismate synthase from Bacillus velezensis (strain DSM 23117 / BGSC 10A6 / LMG 26770 / FZB42) (Bacillus amyloliquefaciens subsp. plantarum).